The primary structure comprises 446 residues: NADH-ubiquinone oxidoreductase chain 4 (446 aa).

A run of 14 helical transmembrane segments spans residues 4–24, 28–48, 56–76, 88–105, 109–131, 141–161, 182–202, 218–238, 245–265, 272–292, 297–317, 330–350, 373–393, and 426–446; these read LILM…FWMV, LFVI…FVNI, VLSY…IVAS, LFLF…LTFS, LFMF…LGWG, VYLL…IFYL, LLYL…LVHL, ILAG…FSFL, YNYI…LVCL, ALIA…LMTL, LSGS…LFCL, LLIN…WFLL, IVSW…FSAA, and FLHW…LFWI.

It belongs to the complex I subunit 4 family.

It is found in the mitochondrion membrane. The enzyme catalyses a ubiquinone + NADH + 5 H(+)(in) = a ubiquinol + NAD(+) + 4 H(+)(out). Core subunit of the mitochondrial membrane respiratory chain NADH dehydrogenase (Complex I) that is believed to belong to the minimal assembly required for catalysis. Complex I functions in the transfer of electrons from NADH to the respiratory chain. The immediate electron acceptor for the enzyme is believed to be ubiquinone. In Ceratitis capitata (Mediterranean fruit fly), this protein is NADH-ubiquinone oxidoreductase chain 4 (ND4).